Here is a 148-residue protein sequence, read N- to C-terminus: D-aminoacyl-tRNA deacylase (148 aa).

Positions 136 to 137 (GP) match the Gly-cisPro motif, important for rejection of L-amino acids motif.

It belongs to the DTD family. In terms of assembly, homodimer.

It localises to the cytoplasm. The catalysed reaction is glycyl-tRNA(Ala) + H2O = tRNA(Ala) + glycine + H(+). It carries out the reaction a D-aminoacyl-tRNA + H2O = a tRNA + a D-alpha-amino acid + H(+). An aminoacyl-tRNA editing enzyme that deacylates mischarged D-aminoacyl-tRNAs. Also deacylates mischarged glycyl-tRNA(Ala), protecting cells against glycine mischarging by AlaRS. Acts via tRNA-based rather than protein-based catalysis; rejects L-amino acids rather than detecting D-amino acids in the active site. By recycling D-aminoacyl-tRNA to D-amino acids and free tRNA molecules, this enzyme counteracts the toxicity associated with the formation of D-aminoacyl-tRNA entities in vivo and helps enforce protein L-homochirality. This Streptococcus mutans serotype c (strain ATCC 700610 / UA159) protein is D-aminoacyl-tRNA deacylase.